The primary structure comprises 387 residues: MSRVGIVLLNLGGPERIQDVGPFLYNLFADPEIIRLPIPALQKPLAWLISTLRSNKSQEAYRSIGGGSPLRRITDQQARELQSLLRQRNVDATTYVAMRYWHPFTESAVADMKADGIEQVVVLPLYPHFSISTSGSSFRELQRLRQGDERFAQLPLRAIRSWHDHPGYLKAMAQLMEREIDACVDPSTAHVFFSAHGVPKSYVEEAGDPYQKEIESCAELIMKTLGRDNPWTLAYQSRVGPVEWLQPYTEEALEELGEKGVKELVVVPISFVSEHIETLEEIDIEYREIATEAGVSNFRRVPALDIDPTFIASLADLVETSLAGPEVDLDEAAALPARTKLYPQEKWSWGWNNSSEVWNGRLAMLGFSAFLVELISGHGPLHALGLL.

Fe cation contacts are provided by His-196 and Glu-277.

The protein belongs to the ferrochelatase family.

It is found in the cytoplasm. It catalyses the reaction heme b + 2 H(+) = protoporphyrin IX + Fe(2+). Its pathway is porphyrin-containing compound metabolism; protoheme biosynthesis; protoheme from protoporphyrin-IX: step 1/1. Its function is as follows. Catalyzes the ferrous insertion into protoporphyrin IX. This is Ferrochelatase from Synechococcus sp. (strain RCC307).